Here is a 171-residue protein sequence, read N- to C-terminus: Adenine phosphoribosyltransferase (171 aa).

This sequence belongs to the purine/pyrimidine phosphoribosyltransferase family. As to quaternary structure, homodimer.

It localises to the cytoplasm. It catalyses the reaction AMP + diphosphate = 5-phospho-alpha-D-ribose 1-diphosphate + adenine. Its pathway is purine metabolism; AMP biosynthesis via salvage pathway; AMP from adenine: step 1/1. In terms of biological role, catalyzes a salvage reaction resulting in the formation of AMP, that is energically less costly than de novo synthesis. In Citrifermentans bemidjiense (strain ATCC BAA-1014 / DSM 16622 / JCM 12645 / Bem) (Geobacter bemidjiensis), this protein is Adenine phosphoribosyltransferase.